The sequence spans 65 residues: UPF0337 protein PA4738 (65 aa).

It belongs to the UPF0337 (CsbD) family.

This is UPF0337 protein PA4738 from Pseudomonas aeruginosa (strain ATCC 15692 / DSM 22644 / CIP 104116 / JCM 14847 / LMG 12228 / 1C / PRS 101 / PAO1).